Here is a 134-residue protein sequence, read N- to C-terminus: Replication enhancer protein (134 aa).

Belongs to the geminiviridae replication enhancer protein family. As to quaternary structure, homooligomer. Interacts with the replication-associated protein (REP). Interacts with host proliferating cell nuclear antigen (PCNA). Interacts with host retinoblastoma-related protein 1 (RBR1), and may thereby deregulate the host cell cycle. Oligomerization and interaction with PCNA are necessary for optimal replication enhancement.

In terms of biological role, increases viral DNA accumulation. Enhances infectivity and symptom expression. This is Replication enhancer protein from Mungbean yellow mosaic virus (strain Vigna) (MYMV).